A 360-amino-acid polypeptide reads, in one-letter code: Phosphoserine aminotransferase (360 aa).

Arginine 41 is an L-glutamate binding site. Residues tryptophan 101, threonine 152, aspartate 172, and glutamine 195 each coordinate pyridoxal 5'-phosphate. The residue at position 196 (lysine 196) is an N6-(pyridoxal phosphate)lysine. Asparagine 237–threonine 238 serves as a coordination point for pyridoxal 5'-phosphate.

This sequence belongs to the class-V pyridoxal-phosphate-dependent aminotransferase family. SerC subfamily. As to quaternary structure, homodimer. Requires pyridoxal 5'-phosphate as cofactor.

It localises to the cytoplasm. The catalysed reaction is O-phospho-L-serine + 2-oxoglutarate = 3-phosphooxypyruvate + L-glutamate. It carries out the reaction 4-(phosphooxy)-L-threonine + 2-oxoglutarate = (R)-3-hydroxy-2-oxo-4-phosphooxybutanoate + L-glutamate. It functions in the pathway amino-acid biosynthesis; L-serine biosynthesis; L-serine from 3-phospho-D-glycerate: step 2/3. Its pathway is cofactor biosynthesis; pyridoxine 5'-phosphate biosynthesis; pyridoxine 5'-phosphate from D-erythrose 4-phosphate: step 3/5. In terms of biological role, catalyzes the reversible conversion of 3-phosphohydroxypyruvate to phosphoserine and of 3-hydroxy-2-oxo-4-phosphonooxybutanoate to phosphohydroxythreonine. In Burkholderia cenocepacia (strain ATCC BAA-245 / DSM 16553 / LMG 16656 / NCTC 13227 / J2315 / CF5610) (Burkholderia cepacia (strain J2315)), this protein is Phosphoserine aminotransferase.